A 55-amino-acid polypeptide reads, in one-letter code: UPF0391 membrane protein Sfum_0248 (55 aa).

2 helical membrane-spanning segments follow: residues tryptophan 4 to isoleucine 24 and alanine 28 to serine 48.

This sequence belongs to the UPF0391 family.

It is found in the cell membrane. This Syntrophobacter fumaroxidans (strain DSM 10017 / MPOB) protein is UPF0391 membrane protein Sfum_0248.